A 361-amino-acid chain; its full sequence is Phosphoserine aminotransferase (361 aa).

Residue R42 coordinates L-glutamate. Pyridoxal 5'-phosphate-binding positions include 76 to 77 (AR), W102, T153, D173, and Q196. K197 bears the N6-(pyridoxal phosphate)lysine mark. 238–239 (NT) is a binding site for pyridoxal 5'-phosphate.

The protein belongs to the class-V pyridoxal-phosphate-dependent aminotransferase family. SerC subfamily. Homodimer. The cofactor is pyridoxal 5'-phosphate.

It localises to the cytoplasm. The enzyme catalyses O-phospho-L-serine + 2-oxoglutarate = 3-phosphooxypyruvate + L-glutamate. It carries out the reaction 4-(phosphooxy)-L-threonine + 2-oxoglutarate = (R)-3-hydroxy-2-oxo-4-phosphooxybutanoate + L-glutamate. It functions in the pathway amino-acid biosynthesis; L-serine biosynthesis; L-serine from 3-phospho-D-glycerate: step 2/3. It participates in cofactor biosynthesis; pyridoxine 5'-phosphate biosynthesis; pyridoxine 5'-phosphate from D-erythrose 4-phosphate: step 3/5. In terms of biological role, catalyzes the reversible conversion of 3-phosphohydroxypyruvate to phosphoserine and of 3-hydroxy-2-oxo-4-phosphonooxybutanoate to phosphohydroxythreonine. The sequence is that of Phosphoserine aminotransferase from Buchnera aphidicola subsp. Acyrthosiphon pisum (strain Tuc7).